Consider the following 56-residue polypeptide: Large ribosomal subunit protein bL33 (56 aa).

The protein belongs to the bacterial ribosomal protein bL33 family.

The sequence is that of Large ribosomal subunit protein bL33 from Ehrlichia canis (strain Jake).